The following is a 260-amino-acid chain: tRNA pseudouridine synthase B (260 aa).

H44 is a substrate binding site. D49 serves as the catalytic Nucleophile. Residues Y77, Y180, and L201 each contribute to the substrate site.

The protein belongs to the pseudouridine synthase TruB family. Type 1 subfamily.

It carries out the reaction uridine(55) in tRNA = pseudouridine(55) in tRNA. Responsible for synthesis of pseudouridine from uracil-55 in the psi GC loop of transfer RNAs. This is tRNA pseudouridine synthase B from Blochmanniella pennsylvanica (strain BPEN).